The following is a 234-amino-acid chain: UstYa family oxidase phomYd' (234 aa).

Positions 1-26 (MEKFFSPSRHNYADLSPTDVPASEES) are disordered. Residues 47–69 (VLVNRLLAASTVALVMVSLWLGW) traverse the membrane as a helical segment. The HXXHC 1 signature appears at 151-155 (HWDHC). N-linked (GlcNAc...) asparagine glycosylation is present at Asn-208.

It belongs to the ustYa family.

It is found in the membrane. It participates in mycotoxin biosynthesis. In terms of biological role, ustYa family oxidase; part of the gene cluster that mediates the biosynthesis of the phomopsins, a group of hexapeptide mycotoxins which infects lupins and causes lupinosis disease in livestock. Within the pathway, phomYd' catalyzes the desaturation of the Asp moiety into 2,3-dehydroaspartic acid (dAsp). The pathway starts with the processing of the precursor phomA' by several endopeptidases including kexin proteases as well as the cluster-specific S41 family peptidase phomP1 and the oligopeptidase phomG' to produce 10 identical copies of the hexapeptide Tyr-Val-Ile-Pro-Ile-Asp. After being excised from the precursor peptide, the core peptides are cyclized and modified post-translationally by enzymes encoded within the gene cluster. The timing and order of proteolysis of the phomA' precursor and PTMs are still unknown. Two tyrosinase-like enzymes, phomQ1' and phomQ2, catalyze the chlorination and hydroxylation of Tyr, respectively. PhomYb, is proposed to be involved in the construction of the macrocyclic structure. The other 4 ustYa family proteins may be involved in PTMs that generate the unique structure of phomopsin A. PhomYa' is required for the hydroxylation of C-beta of Tyr. PhomYc', phomYd', and phomYe are responsible for the biosynthesis of 2,3-dehydroisoleucine (dIle), 2,3-dehydroaspartic acid (dAsp), and 3,4-dehydroproline (dPro), respectively. While dIle formation by phomYc' is indispensable for the installation of dAsp by phomYd', the order of the other PTMs have not been elucidated yet. Most of the biosynthetic enzymes likely have broad substrate specificity, and thus, there might be a metabolic grid from a precursor to phomopsin A. The enzyme(s) responsible for the biosynthesis of 3,4-dehydrovaline (dVal) have also not been identified yet. Finally, phomM' acts as an S-adenosylmethionine-dependent alpha-N-methyltransferase that catalyzes two successive N-methylation reactions, converting N-desmethyl-phomopsin A to phomopsin A and phomopsin A further to an N,N-dimethylated congener called phomopsin E. The protein is UstYa family oxidase phomYd' of Diaporthe leptostromiformis (Lupinosis disease fungus).